The sequence spans 253 residues: Ubiquinone/menaquinone biosynthesis C-methyltransferase UbiE (253 aa).

Residues Thr76, Asp97, and 125-126 (NA) contribute to the S-adenosyl-L-methionine site.

The protein belongs to the class I-like SAM-binding methyltransferase superfamily. MenG/UbiE family.

It catalyses the reaction a 2-demethylmenaquinol + S-adenosyl-L-methionine = a menaquinol + S-adenosyl-L-homocysteine + H(+). The catalysed reaction is a 2-methoxy-6-(all-trans-polyprenyl)benzene-1,4-diol + S-adenosyl-L-methionine = a 5-methoxy-2-methyl-3-(all-trans-polyprenyl)benzene-1,4-diol + S-adenosyl-L-homocysteine + H(+). It participates in quinol/quinone metabolism; menaquinone biosynthesis; menaquinol from 1,4-dihydroxy-2-naphthoate: step 2/2. Its pathway is cofactor biosynthesis; ubiquinone biosynthesis. Its function is as follows. Methyltransferase required for the conversion of demethylmenaquinol (DMKH2) to menaquinol (MKH2) and the conversion of 2-polyprenyl-6-methoxy-1,4-benzoquinol (DDMQH2) to 2-polyprenyl-3-methyl-6-methoxy-1,4-benzoquinol (DMQH2). The protein is Ubiquinone/menaquinone biosynthesis C-methyltransferase UbiE of Rhodopseudomonas palustris (strain HaA2).